The sequence spans 452 residues: Tryptophan biosynthesis protein TrpCF (452 aa).

The indole-3-glycerol phosphate synthase stretch occupies residues 1–253; that stretch reads MPSVLENILK…KACIKLILGE (253 aa). The segment at 254-448 is N-(5'-phosphoribosyl)anthranilate isomerase; that stretch reads NKVCGLTRIK…KDKIKRLARI (195 aa).

This sequence in the N-terminal section; belongs to the TrpC family. The protein in the C-terminal section; belongs to the TrpF family.

The enzyme catalyses N-(5-phospho-beta-D-ribosyl)anthranilate = 1-(2-carboxyphenylamino)-1-deoxy-D-ribulose 5-phosphate. It catalyses the reaction 1-(2-carboxyphenylamino)-1-deoxy-D-ribulose 5-phosphate + H(+) = (1S,2R)-1-C-(indol-3-yl)glycerol 3-phosphate + CO2 + H2O. Its pathway is amino-acid biosynthesis; L-tryptophan biosynthesis; L-tryptophan from chorismate: step 3/5. It functions in the pathway amino-acid biosynthesis; L-tryptophan biosynthesis; L-tryptophan from chorismate: step 4/5. Its function is as follows. Bifunctional enzyme that catalyzes two sequential steps of tryptophan biosynthetic pathway. The first reaction is catalyzed by the isomerase, coded by the TrpF domain; the second reaction is catalyzed by the synthase, coded by the TrpC domain. In Helicobacter pylori (strain ATCC 700392 / 26695) (Campylobacter pylori), this protein is Tryptophan biosynthesis protein TrpCF (trpC).